A 383-amino-acid chain; its full sequence is Succinyl-diaminopimelate desuccinylase (383 aa).

Zn(2+) is bound at residue His79. Residue Asp81 is part of the active site. Asp110 provides a ligand contact to Zn(2+). The active-site Proton acceptor is Glu141. Positions 142, 170, and 355 each coordinate Zn(2+).

The protein belongs to the peptidase M20A family. DapE subfamily. As to quaternary structure, homodimer. It depends on Zn(2+) as a cofactor. Co(2+) is required as a cofactor.

The catalysed reaction is N-succinyl-(2S,6S)-2,6-diaminopimelate + H2O = (2S,6S)-2,6-diaminopimelate + succinate. Its pathway is amino-acid biosynthesis; L-lysine biosynthesis via DAP pathway; LL-2,6-diaminopimelate from (S)-tetrahydrodipicolinate (succinylase route): step 3/3. Catalyzes the hydrolysis of N-succinyl-L,L-diaminopimelic acid (SDAP), forming succinate and LL-2,6-diaminopimelate (DAP), an intermediate involved in the bacterial biosynthesis of lysine and meso-diaminopimelic acid, an essential component of bacterial cell walls. This chain is Succinyl-diaminopimelate desuccinylase, found in Helicobacter pylori (strain ATCC 700392 / 26695) (Campylobacter pylori).